The following is a 1011-amino-acid chain: Ankyrin repeat domain-containing protein 18B (1011 aa).

ANK repeat units follow at residues 67–96, 100–129, 133–162, 166–195, and 199–228; these read KDRT…QINI, LNRT…NPNI, YGNT…NIEA, EGNT…NIHA, and FKRT…HISS. Disordered stretches follow at residues 264–330 and 533–554; these read LRND…GKKK and MHPN…SEER. Coiled-coil stretches lie at residues 277–319, 385–639, 692–722, and 752–908; these read ENLK…ENKQ, NEEM…ELVD, ISLL…CLEM, and FKKL…EAFA. Residues 280–293 show a composition bias toward basic residues; the sequence is KKRKKRKKLKKRKE. Over residues 294–319 the composition is skewed to basic and acidic residues; it reads GAKAEHNLKVASEEKQERLERSENKQ.

The polypeptide is Ankyrin repeat domain-containing protein 18B (ANKRD18B) (Homo sapiens (Human)).